A 314-amino-acid polypeptide reads, in one-letter code: uncharacterized protein (314 aa).

A run of 2 helical transmembrane segments spans residues 23–43 (LALG…MALF) and 98–118 (MASG…GPLT). The segment covering 165–184 (GLGSGAGGGDVGGGGAGGTT) has biased composition (gly residues). Residues 165–314 (GLGSGAGGGD…APDEKTDAGE (150 aa)) form a disordered region. The segment covering 190-202 (GPPPVPTSSPPTT) has biased composition (pro residues). 2 stretches are compositionally biased toward low complexity: residues 203-212 (PAGAPTKSAT) and 219-232 (ASPA…AGMP). Residues 221 to 241 (PASAHMGAAGMPMVPPGAMGA) traverse the membrane as a helical segment. The segment covering 294 to 314 (LLPEHKDFGRIAPDEKTDAGE) has biased composition (basic and acidic residues).

It is found in the cell membrane. This is an uncharacterized protein from Mycobacterium tuberculosis (strain CDC 1551 / Oshkosh).